The primary structure comprises 466 residues: Tubulointerstitial nephritis antigen-like (466 aa).

Residues 1–21 (MWGCWLGLLLLLLAGQAALEA) form the signal peptide. In terms of domain architecture, SMB spans 49 to 96 (EQDMCCRGRADECALPYLGATCYCDLFCNRTVSDCCPDFWDFCLGIPP). 5 disulfide bridges follow: Cys-53–Cys-72, Cys-70–Cys-72, Cys-70–Cys-84, Cys-76–Cys-83, and Cys-84–Cys-91. Asn-77 carries N-linked (GlcNAc...) asparagine glycosylation. N-linked (GlcNAc...) asparagine glycosylation is present at Asn-160.

It belongs to the peptidase C1 family. Post-translationally, glycosylated. Highly expressed in kidney, heart and adrenocortical cells of adrenal glands. Moderately expressed in spleen and liver. Also found in prostate, seminal vesicle, epididymis and testis in male reproductive organs. In adrenal glands is found in the outer cortical regions corresponding to the zona glomerulosa (zG) and the undifferentiated cell zone (zU) (at protein level).

The protein resides in the secreted. Functionally, may be implicated in the adrenocortical zonation and in mechanisms for repressing the CYP11B1 gene expression in adrenocortical cells. This is a non catalytic peptidase C1 family protein. This is Tubulointerstitial nephritis antigen-like (Tinagl1) from Mus musculus (Mouse).